A 379-amino-acid polypeptide reads, in one-letter code: UDP-4-amino-4-deoxy-L-arabinose--oxoglutarate aminotransferase (379 aa).

N6-(pyridoxal phosphate)lysine is present on lysine 182.

The protein belongs to the DegT/DnrJ/EryC1 family. ArnB subfamily. As to quaternary structure, homodimer. The cofactor is pyridoxal 5'-phosphate.

It carries out the reaction UDP-4-amino-4-deoxy-beta-L-arabinose + 2-oxoglutarate = UDP-beta-L-threo-pentopyranos-4-ulose + L-glutamate. Its pathway is nucleotide-sugar biosynthesis; UDP-4-deoxy-4-formamido-beta-L-arabinose biosynthesis; UDP-4-deoxy-4-formamido-beta-L-arabinose from UDP-alpha-D-glucuronate: step 2/3. It participates in bacterial outer membrane biogenesis; lipopolysaccharide biosynthesis. Functionally, catalyzes the conversion of UDP-4-keto-arabinose (UDP-Ara4O) to UDP-4-amino-4-deoxy-L-arabinose (UDP-L-Ara4N). The modified arabinose is attached to lipid A and is required for resistance to polymyxin and cationic antimicrobial peptides. This chain is UDP-4-amino-4-deoxy-L-arabinose--oxoglutarate aminotransferase, found in Escherichia coli O8 (strain IAI1).